A 574-amino-acid polypeptide reads, in one-letter code: MLRMFNTSLVASKLMWVIFTGMLAPTLYMVHCNSTLLLEWNLFSISSTPMMMTIILDPLGLMFSCTVVMISANILKFSTIYMKEDKFINRFTVLVLLFVLSMNMLIFFPHLIILLLGWDGLGIVSFILVIYYQNPKSLAAGMITALTNRIGDVMLLLAIAWTLNQGHWNILHMWAVDENMYQALVIIIAAMTKSAQMPFSSWLPAAMAAPTPVSALVHSSTLVTAGVFLLIRFYNFLSSVWWFTTFLLFVAVSTTLMAGLSASSECDMKKIIALSTLSQLGMMMAAMGLGMAHMAFFHMVTHAMFKALLFVCAGSFIHSHMHSQDLRWMGNLTKQMPTTTSCLIMANLALCGFPFMSGFYSKDMIVEASLYYPHNSLMINLILFAVGLTAFYSTRFTMCVVLSPNNCGPYMHLEESNSLTSPMLLLASMSVISGSALTWILPLKQEMMMIPLDQKLKTLMLVTLGALMSWFFLTTTNMTKTCLYIRHPIINYFSCTMWFLVPLSSQFMMKLPMYVSHNYLKLTDQSWLELLGGQGINNVSSKASNIYLASLKSTPMNYLMMSSMLLLVATLVAI.

Helical transmembrane passes span 10-30 (VASK…LYMV), 50-70 (MMMT…VVMI), 87-107 (FINR…MLIF), 111-131 (LIIL…LVIY), 141-161 (GMIT…AIAW), 181-203 (YQAL…SSWL), 211-231 (TPVS…FLLI), 240-260 (VWWF…MAGL), 280-300 (LGMM…FHMV), 301-321 (THAM…HSHM), 340-360 (TSCL…SGFY), 381-401 (LILF…MCVV), 423-443 (MLLL…ILPL), 458-478 (TLML…TTNM), 489-509 (IINY…QFMM), and 554-574 (TPMN…LVAI).

This sequence belongs to the complex I subunit 5 family.

It localises to the mitochondrion inner membrane. The enzyme catalyses a ubiquinone + NADH + 5 H(+)(in) = a ubiquinol + NAD(+) + 4 H(+)(out). In terms of biological role, core subunit of the mitochondrial membrane respiratory chain NADH dehydrogenase (Complex I) that is believed to belong to the minimal assembly required for catalysis. Complex I functions in the transfer of electrons from NADH to the respiratory chain. The immediate electron acceptor for the enzyme is believed to be ubiquinone. In Lumbricus terrestris (Common earthworm), this protein is NADH-ubiquinone oxidoreductase chain 5 (ND5).